Consider the following 190-residue polypeptide: Elongation factor P-like protein (190 aa).

It belongs to the elongation factor P family.

The sequence is that of Elongation factor P-like protein from Klebsiella pneumoniae subsp. pneumoniae (strain ATCC 700721 / MGH 78578).